The sequence spans 136 residues: Protein LpdD (136 aa).

It belongs to the CinA family.

Probably involved in tannin degradation, however the precise biochemical function in metabolism of gallate is unknown. The sequence is that of Protein LpdD from Lactiplantibacillus plantarum (strain ATCC BAA-793 / NCIMB 8826 / WCFS1) (Lactobacillus plantarum).